Consider the following 396-residue polypeptide: Probable sugar efflux transporter (396 aa).

Helical transmembrane passes span 15-35 (VVTL…PVGL), 50-70 (VGIM…PFML), 81-101 (LICL…AWNF), 103-123 (VLVI…SITA), 136-156 (AQAL…GLPI), 169-189 (TFFA…KLLP), 202-222 (LPLL…VVVV), 246-266 (FATV…LVFG), 275-295 (SLVS…LPAA), 301-321 (LAIL…GMQV), 333-353 (VAMA…ALVG), and 364-384 (AIGY…VLIF).

This sequence belongs to the major facilitator superfamily. SotB (TC 2.A.1.2) family.

It localises to the cell inner membrane. In terms of biological role, involved in the efflux of sugars. The physiological role may be the reduction of the intracellular concentration of toxic sugars or sugar metabolites. This Salmonella paratyphi A (strain ATCC 9150 / SARB42) protein is Probable sugar efflux transporter.